We begin with the raw amino-acid sequence, 83 residues long: Neurotoxin LmNaTx10 (83 aa).

Positions 1 to 19 (MNFLIFIAVASSLALGALC) are cleaved as a signal peptide. Residues 21–80 (KEGYPYDGNNCRYICFRNQYCDDLCKKLKGESGYCYGWNQSCYCYGLPDTEKTKPDKRCH) enclose the LCN-type CS-alpha/beta domain. 4 cysteine pairs are disulfide-bonded: cysteine 31–cysteine 79, cysteine 35–cysteine 55, cysteine 41–cysteine 62, and cysteine 45–cysteine 64.

The protein belongs to the long (4 C-C) scorpion toxin superfamily. Sodium channel inhibitor family. Alpha subfamily. In terms of tissue distribution, expressed by the venom gland.

The protein localises to the secreted. Binds voltage-independently at site-3 of voltage-gated sodium channels (Nav) and inhibits the inactivation of the activated channels, thereby blocking neuronal transmission. This Lychas mucronatus (Chinese swimming scorpion) protein is Neurotoxin LmNaTx10.